A 477-amino-acid chain; its full sequence is GTPase Der (477 aa).

EngA-type G domains lie at 3–167 (LTIA…GKER) and 206–382 (LRIA…RMWN). Residues 9–16 (GRPNVGKS), 56–60 (DTAGL), 119–122 (NKSE), 212–219 (GRPNTGKS), 259–263 (DTAGL), and 324–327 (NKWD) contribute to the GTP site. Residues 383 to 467 (RRISTAKLNR…PIRISLRASD (85 aa)) enclose the KH-like domain.

The protein belongs to the TRAFAC class TrmE-Era-EngA-EngB-Septin-like GTPase superfamily. EngA (Der) GTPase family. Associates with the 50S ribosomal subunit.

GTPase that plays an essential role in the late steps of ribosome biogenesis. In Bartonella quintana (strain Toulouse) (Rochalimaea quintana), this protein is GTPase Der.